Consider the following 436-residue polypeptide: Testican-3 (436 aa).

The first 21 residues, 1-21, serve as a signal peptide directing secretion; that stretch reads MLKVSAVLCVCAAAWCSQSLA. 8 disulfide bridges follow: cysteine 90–cysteine 101, cysteine 95–cysteine 111, cysteine 139–cysteine 169, cysteine 142–cysteine 162, cysteine 151–cysteine 183, cysteine 317–cysteine 341, cysteine 352–cysteine 359, and cysteine 361–cysteine 380. The Kazal-like domain occupies 133-185; sequence GPILSTCKQCPVVYPSPVCGSDGHTYSFQCKLEYQACVLGKQISVKCEGHCPC. Residues 314-380 form the Thyroglobulin type-1 domain; sequence DPPCQTELSN…GSRINGVADC (67 aa). O-linked (Xyl...) (glycosaminoglycan) serine glycosylation is found at serine 387 and serine 392. Residues 393-436 are disordered; that stretch reads GDFHEWTDDEDDEDDIMNDEDEIEDDDEDEGDDDDGGDDHDVYI. The segment covering 399-430 has biased composition (acidic residues); sequence TDDEDDEDDIMNDEDEIEDDDEDEGDDDDGGD.

Contains chondroitin sulfate and heparan sulfate O-linked oligosaccharides. In terms of tissue distribution, expressed in brain.

The protein localises to the secreted. The protein resides in the extracellular space. It is found in the extracellular matrix. In terms of biological role, may participate in diverse steps of neurogenesis. Inhibits the processing of pro-matrix metalloproteinase 2 (MMP-2) by MT1-MMP and MT3-MMP. May interfere with tumor invasion. This Homo sapiens (Human) protein is Testican-3 (SPOCK3).